Consider the following 397-residue polypeptide: Succinate--CoA ligase [ADP-forming] subunit beta (397 aa).

An ATP-grasp domain is found at 9-254; it reads KALLKGYGAP…ETEEDAKEIE (246 aa). ATP-binding positions include K46, 53–55, E109, A112, and E117; that span reads GRG. N209 and D223 together coordinate Mg(2+). Residues N274 and 331 to 333 contribute to the substrate site; that span reads GIM.

Belongs to the succinate/malate CoA ligase beta subunit family. In terms of assembly, heterotetramer of two alpha and two beta subunits. The cofactor is Mg(2+).

The enzyme catalyses succinate + ATP + CoA = succinyl-CoA + ADP + phosphate. It carries out the reaction GTP + succinate + CoA = succinyl-CoA + GDP + phosphate. The protein operates within carbohydrate metabolism; tricarboxylic acid cycle; succinate from succinyl-CoA (ligase route): step 1/1. In terms of biological role, succinyl-CoA synthetase functions in the citric acid cycle (TCA), coupling the hydrolysis of succinyl-CoA to the synthesis of either ATP or GTP and thus represents the only step of substrate-level phosphorylation in the TCA. The beta subunit provides nucleotide specificity of the enzyme and binds the substrate succinate, while the binding sites for coenzyme A and phosphate are found in the alpha subunit. This Rhizobium johnstonii (strain DSM 114642 / LMG 32736 / 3841) (Rhizobium leguminosarum bv. viciae) protein is Succinate--CoA ligase [ADP-forming] subunit beta.